We begin with the raw amino-acid sequence, 110 residues long: Large ribosomal subunit protein uL22 (110 aa).

The protein belongs to the universal ribosomal protein uL22 family. Part of the 50S ribosomal subunit.

Functionally, this protein binds specifically to 23S rRNA; its binding is stimulated by other ribosomal proteins, e.g. L4, L17, and L20. It is important during the early stages of 50S assembly. It makes multiple contacts with different domains of the 23S rRNA in the assembled 50S subunit and ribosome. The globular domain of the protein is located near the polypeptide exit tunnel on the outside of the subunit, while an extended beta-hairpin is found that lines the wall of the exit tunnel in the center of the 70S ribosome. This chain is Large ribosomal subunit protein uL22, found in Vesicomyosocius okutanii subsp. Calyptogena okutanii (strain HA).